The following is a 486-amino-acid chain: Photosystem II CP43 reaction center protein (486 aa).

Residues 1-28 (MKVFVHGWQHKISHTRILYSLRRFYHVE) constitute a propeptide that is removed on maturation. Helical transmembrane passes span 82 to 106 (LFEV…PHLA), 147 to 168 (LIGP…RDKN), 191 to 213 (KALF…RLIN), 268 to 288 (KPFA…LSYS), and 304 to 325 (WYNN…ASQA). A [CaMn4O5] cluster-binding site is contributed by E380. A helical transmembrane segment spans residues 460 to 484 (RARAAAAGFEKGINRENEAVLSMRP).

This sequence belongs to the PsbB/PsbC family. PsbC subfamily. As to quaternary structure, PSII is composed of 1 copy each of membrane proteins PsbA, PsbB, PsbC, PsbD, PsbE, PsbF, PsbH, PsbI, PsbJ, PsbK, PsbL, PsbM, PsbT, PsbX, PsbY, PsbZ, Psb30/Ycf12, at least 3 peripheral proteins of the oxygen-evolving complex and a large number of cofactors. It forms dimeric complexes. It depends on Binds multiple chlorophylls and provides some of the ligands for the Ca-4Mn-5O cluster of the oxygen-evolving complex. It may also provide a ligand for a Cl- that is required for oxygen evolution. PSII binds additional chlorophylls, carotenoids and specific lipids. as a cofactor.

The protein localises to the plastid. It is found in the chloroplast thylakoid membrane. Functionally, one of the components of the core complex of photosystem II (PSII). It binds chlorophyll and helps catalyze the primary light-induced photochemical processes of PSII. PSII is a light-driven water:plastoquinone oxidoreductase, using light energy to abstract electrons from H(2)O, generating O(2) and a proton gradient subsequently used for ATP formation. This is Photosystem II CP43 reaction center protein from Gracilaria tenuistipitata var. liui (Red alga).